Here is a 345-residue protein sequence, read N- to C-terminus: Transcription factor STKL1 (345 aa).

The disordered stretch occupies residues Met-1–Ser-145. The span at Ser-11–Ile-22 shows a compositional bias: low complexity. The segment covering Ser-23–Glu-32 has biased composition (basic and acidic residues). Over residues Val-37–Pro-46 the composition is skewed to polar residues. Residue Ser-105 is modified to Phosphoserine. Over residues Arg-114 to Lys-137 the composition is skewed to basic and acidic residues.

Belongs to the GeBP family. As to expression, expressed strongly in leaves and flowers, weakly in roots, and very weakly in stems.

The protein resides in the nucleus. In terms of biological role, transcription repressor that binds DNA in a sequence-specific manner, 5'-GCCT-3', to regulate the expression of PGR. Acts as a modulatory component for the glucose-triggered developmental leaf growth process. In Arabidopsis thaliana (Mouse-ear cress), this protein is Transcription factor STKL1.